The sequence spans 368 residues: MRALSVFFALFCFLALSSASPGQDVVKRVTSGSLQQVTNFGSNPSGTLMYIYVPKNLATKPGIVVAIHYCTGTAQAYYTGSPYAQLAEQYGFIVIYPQSPYSGTCWDVSSQSALTHNGGGDSNSIANMVTWTISQYNADTSKVFVTGSSSGAMMTNVMAATYPELFAAATVYSGVSAGCFYSSSNQVDAWNSSCAQGNVISTPEVWGGIAKAMYPGYTGPRPRMQIYHGSTDTTLYPQNYYETCKQWAGVFGYNYNSPQSTQSNTPQANYQTTIWGPNLQGIFATGVGHTVPIHGEQDMEWFGFAGGSSTTTTQPTTTSTTTSSGGSSTGTGVAAHWGQCGGNGWTGPTVCASGYTCTVVNAWYSQCL.

Residues 1–19 form the signal peptide; the sequence is MRALSVFFALFCFLALSSA. Positions 20 to 28 are excised as a propeptide; sequence SPGQDVVKR. Positions 32 to 304 are catalytic; sequence GSLQQVTNFG…GEQDMEWFGF (273 aa). Ser149 functions as the Charge relay system in the catalytic mechanism. An N-linked (GlcNAc...) asparagine glycan is attached at Asn191. The ser/Thr-rich linker stretch occupies residues 305-333; it reads AGGSSTTTTQPTTTSTTTSSGGSSTGTGV. The segment at 306 to 330 is disordered; that stretch reads GGSSTTTTQPTTTSTTTSSGGSSTG. The span at 307 to 330 shows a compositional bias: low complexity; the sequence is GSSTTTTQPTTTSTTTSSGGSSTG. The region spanning 332 to 368 is the CBM1 domain; it reads GVAAHWGQCGGNGWTGPTVCASGYTCTVVNAWYSQCL.

Belongs to the carbohydrate esterase 1 (CE1) family. AxeA subfamily. As to quaternary structure, monomer.

The protein resides in the secreted. It catalyses the reaction Deacetylation of xylans and xylo-oligosaccharides.. It participates in glycan degradation; xylan degradation. Functionally, acetylxylan esterase involved in the hydrolysis of xylan, a major structural heterogeneous polysaccharide found in plant biomass representing the second most abundant polysaccharide in the biosphere, after cellulose. Degrades acetylated xylans by cleaving acetyl side groups from the hetero-xylan backbone. The chain is Probable acetylxylan esterase A (axeA) from Neosartorya fischeri (strain ATCC 1020 / DSM 3700 / CBS 544.65 / FGSC A1164 / JCM 1740 / NRRL 181 / WB 181) (Aspergillus fischerianus).